Reading from the N-terminus, the 332-residue chain is tRNA dimethylallyltransferase (332 aa).

Residue 17–24 (GPTCSGKS) participates in ATP binding. 19–24 (TCSGKS) lines the substrate pocket. Interaction with substrate tRNA stretches follow at residues 42–45 (DSMQ) and 166–170 (QRVAR).

Belongs to the IPP transferase family. Monomer. Mg(2+) serves as cofactor.

It catalyses the reaction adenosine(37) in tRNA + dimethylallyl diphosphate = N(6)-dimethylallyladenosine(37) in tRNA + diphosphate. In terms of biological role, catalyzes the transfer of a dimethylallyl group onto the adenine at position 37 in tRNAs that read codons beginning with uridine, leading to the formation of N6-(dimethylallyl)adenosine (i(6)A). The sequence is that of tRNA dimethylallyltransferase from Gluconacetobacter diazotrophicus (strain ATCC 49037 / DSM 5601 / CCUG 37298 / CIP 103539 / LMG 7603 / PAl5).